The following is a 381-amino-acid chain: EPS I polysaccharide export outer membrane protein EpsA (381 aa).

The first 23 residues, 1–23, serve as a signal peptide directing secretion; that stretch reads MFVSIPNIRKAVVSLSVVPLLAA. The N-palmitoyl cysteine moiety is linked to residue Cys-24. Cys-24 is lipidated: S-diacylglycerol cysteine.

The protein belongs to the BexD/CtrA/VexA family.

It is found in the cell outer membrane. Its function is as follows. Probably involved in polymerization and/or export of exopolysaccharide EPS I which functions as a virulence factor. This is EPS I polysaccharide export outer membrane protein EpsA (epsA) from Ralstonia nicotianae (strain ATCC BAA-1114 / GMI1000) (Ralstonia solanacearum).